A 170-amino-acid polypeptide reads, in one-letter code: Large ribosomal subunit protein uL15 (170 aa).

The segment covering 1-12 has biased composition (basic and acidic residues); the sequence is MKLHDLRPAEGA. Residues 1–52 are disordered; it reads MKLHDLRPAEGAHRKRKRIGRGHGSGKGKTGGKGMMGQKARSGPGPYRTFEG. A compositionally biased stretch (basic residues) spans 13–26; that stretch reads HRKRKRIGRGHGSG.

The protein belongs to the universal ribosomal protein uL15 family. Part of the 50S ribosomal subunit.

Functionally, binds to the 23S rRNA. This is Large ribosomal subunit protein uL15 from Chloroflexus aurantiacus (strain ATCC 29366 / DSM 635 / J-10-fl).